The primary structure comprises 209 residues: Small ribosomal subunit protein uS4 (209 aa).

The S4 RNA-binding domain maps to arginine 99–lysine 162.

It belongs to the universal ribosomal protein uS4 family. Part of the 30S ribosomal subunit. Contacts protein S5. The interaction surface between S4 and S5 is involved in control of translational fidelity.

Functionally, one of the primary rRNA binding proteins, it binds directly to 16S rRNA where it nucleates assembly of the body of the 30S subunit. Its function is as follows. With S5 and S12 plays an important role in translational accuracy. The polypeptide is Small ribosomal subunit protein uS4 (Syntrophomonas wolfei subsp. wolfei (strain DSM 2245B / Goettingen)).